Reading from the N-terminus, the 281-residue chain is Aquaporin-9 (281 aa).

Over 1 to 17 (MGAFVNTKVYIENKNIR) the chain is Cytoplasmic. The chain crosses the membrane as a helical span at residues 18-36 (DWLSEALSMFMYMSLLLGS). Topologically, residues 37 to 50 (AATGHFSGREDDAL) are extracellular. Residues 51–69 (FGVIFQGFSITFGIYIGGA) form a helical membrane-spanning segment. The Cytoplasmic segment spans residues 70–71 (MS). The segment at residues 72 to 84 (GAIINPALTLAVA) is an intramembrane region (discontinuously helical). Residues 76–78 (NPA) carry the NPA 1 motif. Residues 85-90 (LLGKIS) are Cytoplasmic-facing. A helical transmembrane segment spans residues 91–115 (WRKCIVLQSAQYIGSFIASAVVYLI). At 116–157 (YNDSLDAFGAGANFTATEPGVFRKDVAGIWSTFPKTYLKERG) the chain is on the extracellular side. Asn117 and Asn128 each carry an N-linked (GlcNAc...) asparagine glycan. The helical transmembrane segment at 158–175 (AIFNQIFCSMLLTFGFLA) threads the bilayer. The Cytoplasmic segment spans residues 176-187 (ISDYKNFRPSKG). A helical membrane pass occupies residues 188–204 (LFPIAVGLLVMTVFLAF). The Extracellular segment spans residues 205-207 (SYS). The discontinuously helical intramembrane region spans 208 to 222 (TGAAMNPARDFSPRL). The NPA 2 signature appears at 213–215 (NPA). Over 223 to 241 (WSLIIGYGIEVFSYNQYEW) the chain is Extracellular. Residues 242-262 (FWIPWLMPYVGAMLGALIYQL) traverse the membrane as a helical segment. The Cytoplasmic segment spans residues 263–281 (LIGAQWSKGQKGESKHKDP).

This sequence belongs to the MIP/aquaporin (TC 1.A.8) family.

Its subcellular location is the cell membrane. It carries out the reaction H2O(in) = H2O(out). In terms of biological role, aquaglyceroporin that may modulate the water content and osmolytes during anhydrobiosis. This Milnesium tardigradum (Water bear) protein is Aquaporin-9.